The sequence spans 898 residues: Chloride channel protein 2 (898 aa).

Ala-2 is subject to N-acetylalanine. Over 2–87 (AAAAAEEGME…RCHKFLVSRV (86 aa)) the chain is Cytoplasmic. The tract at residues 16-34 (QYEQTLMYGRYTQDLGAFA) is essential for channel gating by both voltage and cell volume. Residue Thr-20 is modified to Phosphothreonine. Residues 36 to 49 (EEAARIRLGGPEPW) are modulates channel gating by both voltage and cell volume. The next 2 membrane-spanning stretches (helical) occupy residues 88–121 (GEDWIFLVLLGLLMALVSWVMDYAIAACLQAQQW) and 130–155 (ILLQYLAWVTYPVVLITFSAGFTQIL). A Selectivity filter part_1 motif is present at residues 161–165 (GSGIP). Position 162 (Ser-162) interacts with chloride. The segment at residues 164–171 (IPEMKTIL) is an intramembrane region (helical). The next 2 membrane-spanning stretches (helical) occupy residues 180 to 198 (LTLKTFIAKVIGLTCALGS) and 205 to 223 (EGPFVHIASMCAALLSKFL). A Selectivity filter part_2 motif is present at residues 203–207 (GKEGP). 2 intramembrane regions (helical) span residues 239-251 (MLAAACAVGVGCC) and 255-263 (PIGGVLFSI). Helical transmembrane passes span 275–295 (YWRGFFAATFSAFIFRVLAVW), 321–349 (LPAFAVIGIASGFGGALFVYLNRKIVQVM), 358–377 (FLMRKRLLFPALVTLLISTL), 429–449 (ANVFLTLVIFILMKFWMSALA), and 457–480 (GAFMPVFVIGAAFGRLVGESMAAW). The Selectivity filter part_3 signature appears at 457–461 (GAFMP). Phe-459 serves as a coordination point for chloride. The helical intramembrane region spans 497–511 (GGYAVVGAAALAGAV). Positions 512–513 (TH) form an intramembrane region, note=Loop between two helices. Residues 514-525 (TVSTAVIVFELT) constitute an intramembrane region (helical). An intramembrane region (note=Loop between two helices) is located at residues 526–530 (GQIAH). The helical transmembrane segment at 531 to 548 (ILPVMIAVILANAVAQSL) threads the bilayer. The Cytoplasmic segment spans residues 549-898 (QPSLYDSIIR…SPSDSDDKCQ (350 aa)). Tyr-553 is a chloride binding site. The 59-residue stretch at 584 to 642 (MVRDVPHVALSCTFRDLRLALHRTKGRMLALVESPESMILLGSIERSQVVALLGAQLSP) folds into the CBS 1 domain. Disordered stretches follow at residues 643 to 672 (ARRRQHMQERRATQTSPLSDQEGPPTPEAS) and 686 to 717 (AARGETHKPLKPALKRGPSVTRNLGESPTGSA). Polar residues predominate over residues 705 to 717 (VTRNLGESPTGSA). A phosphoserine mark is found at Ser-712 and Ser-758. The 61-residue stretch at 790–850 (IDPAPFQLVE…GSVTAQGVKV (61 aa)) folds into the CBS 2 domain. The short motif at 812 to 813 (LL) is the Basolateral membrane sorting element. A disordered region spans residues 856 to 898 (SFRDSATSSSDTETTEVHALWGPHSRHGLPREGSPSDSDDKCQ).

The protein belongs to the chloride channel (TC 2.A.49) family. ClC-2/CLCN2 subfamily. In terms of assembly, homodimer. Interacts with auxiliary subunit HEPACAM. Phosphorylated. Activated by dephosphorylation. As to expression, ubiquitously expressed. Moderately expressed in aortic and coronary vascular smooth muscle cells and expressed at a low level in aortic endothelial cells. Expressed in the adrenal gland, predominantly in the zona glomerulosa. Expressed in white mater perivascular astrocytes and ependymal cells (at protein level).

Its subcellular location is the cell membrane. The protein localises to the basolateral cell membrane. The protein resides in the cell projection. It is found in the dendritic spine membrane. It localises to the axon. It carries out the reaction chloride(in) = chloride(out). The enzyme catalyses thiocyanate(in) = thiocyanate(out). It catalyses the reaction bromide(in) = bromide(out). The catalysed reaction is nitrate(in) = nitrate(out). It carries out the reaction iodide(out) = iodide(in). With respect to regulation, common gate kinetics are down-regulated by intracellular ATP. Inhibited by AK-42, a derivative of meclofenamate. Inhibited by Cd(2+). Inhibited by Zn(2+) and PKC activation. Inhibited at acidic pH. CCLN2:HEPACAM channel conductance is up-regulated upon hypo-osmolarity. Its function is as follows. Voltage-gated and osmosensitive chloride channel. Forms a homodimeric channel where each subunit has its own ion conduction pathway. Conducts double-barreled currents controlled by two types of gates, two fast glutamate gates that control each subunit independently and a slow common gate that opens and shuts off both subunits simultaneously. Displays inward rectification currents activated upon membrane hyperpolarization and extracellular hypotonicity. Contributes to chloride conductance involved in neuron excitability. In hippocampal neurons, generates a significant part of resting membrane conductance and provides an additional chloride efflux pathway to prevent chloride accumulation in dendrites upon GABA receptor activation. In glia, associates with the auxiliary subunit HEPACAM/GlialCAM at astrocytic processes and myelinated fiber tracts where it may regulate transcellular chloride flux buffering extracellular chloride and potassium concentrations. Regulates aldosterone production in adrenal glands. The opening of CLCN2 channels at hyperpolarized membrane potentials in the glomerulosa causes cell membrane depolarization, activation of voltage-gated calcium channels and increased expression of aldosterone synthase, the rate-limiting enzyme for aldosterone biosynthesis. Contributes to chloride conductance in retinal pigment epithelium involved in phagocytosis of shed photoreceptor outer segments and photoreceptor renewal. Conducts chloride currents at the basolateral membrane of epithelial cells with a role in chloride reabsorption rather than secretion. Permeable to small monovalent anions with chloride &gt; thiocyanate &gt; bromide &gt; nitrate &gt; iodide ion selectivity. The sequence is that of Chloride channel protein 2 from Homo sapiens (Human).